A 401-amino-acid chain; its full sequence is Chalcone synthase 1 (401 aa).

Residue Cys-168 is part of the active site.

It belongs to the thiolase-like superfamily. Chalcone/stilbene synthases family.

It catalyses the reaction (E)-4-coumaroyl-CoA + 3 malonyl-CoA + 3 H(+) = 2',4,4',6'-tetrahydroxychalcone + 3 CO2 + 4 CoA. It participates in secondary metabolite biosynthesis; flavonoid biosynthesis. Its function is as follows. The primary product of this enzyme is 4,2',4',6'-tetrahydroxychalcone (also termed naringenin-chalcone or chalcone) which can under specific conditions spontaneously isomerize into naringenin. The protein is Chalcone synthase 1 (CHS1) of Sorghum bicolor (Sorghum).